The chain runs to 35 residues: Augerpeptide hheTx4 (35 aa).

In terms of processing, contains 4 disulfide bonds. Expressed by the venom duct.

The protein resides in the secreted. The chain is Augerpeptide hheTx4 from Hastula hectica (Sea snail).